A 235-amino-acid chain; its full sequence is Carboxy-S-adenosyl-L-methionine synthase (235 aa).

Residues Y35, G60–S62, D84–N85, D110–I111, N125, and R192 contribute to the S-adenosyl-L-methionine site.

The protein belongs to the class I-like SAM-binding methyltransferase superfamily. Cx-SAM synthase family. As to quaternary structure, homodimer.

The enzyme catalyses prephenate + S-adenosyl-L-methionine = carboxy-S-adenosyl-L-methionine + 3-phenylpyruvate + H2O. Catalyzes the conversion of S-adenosyl-L-methionine (SAM) to carboxy-S-adenosyl-L-methionine (Cx-SAM). This Sulfurimonas denitrificans (strain ATCC 33889 / DSM 1251) (Thiomicrospira denitrificans (strain ATCC 33889 / DSM 1251)) protein is Carboxy-S-adenosyl-L-methionine synthase.